The primary structure comprises 405 residues: Protein lin-11 (405 aa).

Glycyl lysine isopeptide (Lys-Gly) (interchain with G-Cter in SUMO) cross-links involve residues K17 and K18. LIM zinc-binding domains are found at residues C68–S124 and C127–K187. Positions S189–N205 are enriched in polar residues. 2 disordered regions span residues S189–V208 and G224–T246. A DNA-binding region (homeobox) is located at residues R241–K300.

Expressed in ADL, AVJL, AIZL, RICL, RIF and AVG neurons.

It is found in the nucleus. Probable transcription factor which is required for asymmetric division of vulval blast cells. Involved in olfactory plasticity probably by regulating the expression of transcription factor mbr-1 in RIF neurons. Plays a role in the chemorepulsive response toward ascaroside pheromones mediated by the ADL sensory neurons, probably by regulating E-box motif 5'-CANNTG-3' containing target genes in the ADL neurons. Plays a role in the differentiation of the ADL sensory neurons. In Caenorhabditis elegans, this protein is Protein lin-11 (lin-11).